Consider the following 160-residue polypeptide: Large ribosomal subunit protein eL29 (160 aa).

Residues 1 to 26 are compositionally biased toward basic residues; it reads MAKSKNHTTHNQSRKWHRNGIKKPRS. The segment at 1–32 is disordered; the sequence is MAKSKNHTTHNQSRKWHRNGIKKPRSQRYESL. At lysine 5 the chain carries N6-methyllysine. A Phosphoserine modification is found at serine 31. Lysine 33 is modified (N6-acetyllysine). Residues 119-160 are disordered; that stretch reads CRPKSQAKAQSKAKATAGGTAAAPVPPASAPKGAQAPTKAPQ. Residues 121-141 are compositionally biased toward low complexity; it reads PKSQAKAQSKAKATAGGTAAA.

This sequence belongs to the eukaryotic ribosomal protein eL29 family. Component of the large ribosomal subunit.

It is found in the cytoplasm. In terms of biological role, component of the large ribosomal subunit. The ribosome is a large ribonucleoprotein complex responsible for the synthesis of proteins in the cell. This is Large ribosomal subunit protein eL29 (RPL29) from Sus scrofa (Pig).